Reading from the N-terminus, the 649-residue chain is 1,4-alpha-glucan branching enzyme GlgB (649 aa).

The active-site Nucleophile is aspartate 315. Glutamate 366 acts as the Proton donor in catalysis.

Belongs to the glycosyl hydrolase 13 family. GlgB subfamily. In terms of assembly, monomer.

It carries out the reaction Transfers a segment of a (1-&gt;4)-alpha-D-glucan chain to a primary hydroxy group in a similar glucan chain.. The protein operates within glycan biosynthesis; glycogen biosynthesis. Its function is as follows. Catalyzes the formation of the alpha-1,6-glucosidic linkages in glycogen by scission of a 1,4-alpha-linked oligosaccharide from growing alpha-1,4-glucan chains and the subsequent attachment of the oligosaccharide to the alpha-1,6 position. The polypeptide is 1,4-alpha-glucan branching enzyme GlgB (Ligilactobacillus salivarius (strain UCC118) (Lactobacillus salivarius)).